Consider the following 317-residue polypeptide: Movement protein (317 aa).

The segment at 223-317 is disordered; it reads ETGSIRGIAP…RVTDPNPERL (95 aa). The span at 255 to 276 shows a compositional bias: low complexity; it reads SKTTKLPSLEPSSGSSSGLSMS. Residues 302–317 show a composition bias toward basic and acidic residues; it reads HLSDKGRVTDPNPERL.

Interacts with host glyceraldehyde 3-phosphate dehydrogenase-A/NbGAPDH-A; this interaction plays a positive role in cell-to-cell movement of the virus.

Its subcellular location is the host cell wall. The protein localises to the host endoplasmic reticulum membrane. Its function is as follows. Plays an essential role in cell-to-cell movement and long-distance transport of the viral genome. Mechanistically, movement protein is recruited by viral replicase complexes formed on RNA1 to punctate structures on the host cortical endoplasmic reticulum. In turn, interacts with the viral genome and mediates virion movement from cell to cell. Also acts as a suppressor of RNA-mediated gene silencing, also known as post-transcriptional gene silencing (PTGS), a mechanism of plant viral defense that limits the accumulation of viral RNAs. In Red clover necrotic mosaic virus (RCNMV), this protein is Movement protein.